The chain runs to 92 residues: SPbeta prophage-derived uncharacterized protein YopY (92 aa).

In Bacillus subtilis (strain 168), this protein is SPbeta prophage-derived uncharacterized protein YopY (yopY).